Consider the following 386-residue polypeptide: Succinate--CoA ligase [ADP-forming] subunit beta (386 aa).

The ATP-grasp domain maps to Lys9 to Leu244. Residues Lys46, Gly53–Gly55, Val102, and Glu107 each bind ATP. Mg(2+) contacts are provided by Asn199 and Asp213. Substrate-binding positions include Asn264 and Gly321 to Met323.

It belongs to the succinate/malate CoA ligase beta subunit family. As to quaternary structure, heterotetramer of two alpha and two beta subunits. Mg(2+) is required as a cofactor.

The enzyme catalyses succinate + ATP + CoA = succinyl-CoA + ADP + phosphate. It catalyses the reaction GTP + succinate + CoA = succinyl-CoA + GDP + phosphate. It functions in the pathway carbohydrate metabolism; tricarboxylic acid cycle; succinate from succinyl-CoA (ligase route): step 1/1. Its function is as follows. Succinyl-CoA synthetase functions in the citric acid cycle (TCA), coupling the hydrolysis of succinyl-CoA to the synthesis of either ATP or GTP and thus represents the only step of substrate-level phosphorylation in the TCA. The beta subunit provides nucleotide specificity of the enzyme and binds the substrate succinate, while the binding sites for coenzyme A and phosphate are found in the alpha subunit. This is Succinate--CoA ligase [ADP-forming] subunit beta from Chlamydia muridarum (strain MoPn / Nigg).